A 1079-amino-acid chain; its full sequence is DNA ligase 4 (1079 aa).

The tract at residues 1–20 is disordered; it reads MAVHAPYNHAPPPTQEINGQ. 10 residues coordinate ATP: glutamate 295, lysine 297, leucine 298, arginine 302, glutamate 357, phenylalanine 395, glutamate 460, lysine 465, lysine 482, and lysine 484. Lysine 297 functions as the N6-AMP-lysine intermediate in the catalytic mechanism. Glutamate 357 is a Mg(2+) binding site. Residue glutamate 460 coordinates Mg(2+). A BRCT 1 domain is found at 699-789; the sequence is VETSIFSDMT…TALPFLKEFL (91 aa). The span at 838 to 847 shows a compositional bias: acidic residues; sequence DGEDKDEIDV. Positions 838-942 are disordered; the sequence is DGEDKDEIDV…SDVGVNGDDY (105 aa). 2 stretches are compositionally biased toward basic and acidic residues: residues 848-878 and 900-914; these read EESR…KKLQ and MSLK…ERSR. Positions 968–1078 constitute a BRCT 2 domain; the sequence is DEDRIFYHLA…TLLDEDLYKP (111 aa).

This sequence belongs to the ATP-dependent DNA ligase family. Mg(2+) serves as cofactor.

Its subcellular location is the nucleus. The catalysed reaction is ATP + (deoxyribonucleotide)n-3'-hydroxyl + 5'-phospho-(deoxyribonucleotide)m = (deoxyribonucleotide)n+m + AMP + diphosphate.. In terms of biological role, DNA ligase involved in DNA non-homologous end joining (NHEJ); required for double-strand break (DSB) repair. The protein is DNA ligase 4 (LIG4) of Cryptococcus neoformans var. neoformans serotype D (strain JEC21 / ATCC MYA-565) (Filobasidiella neoformans).